We begin with the raw amino-acid sequence, 396 residues long: Phosphoglycerate kinase (396 aa).

Substrate is bound by residues 21-23 (DLN), Arg36, 59-62 (HLGR), Arg113, and Arg146. ATP is bound by residues Lys197, Glu319, and 345 to 348 (GGDT).

Belongs to the phosphoglycerate kinase family. As to quaternary structure, monomer.

It localises to the cytoplasm. The enzyme catalyses (2R)-3-phosphoglycerate + ATP = (2R)-3-phospho-glyceroyl phosphate + ADP. Its pathway is carbohydrate degradation; glycolysis; pyruvate from D-glyceraldehyde 3-phosphate: step 2/5. The protein is Phosphoglycerate kinase of Legionella pneumophila (strain Lens).